Consider the following 98-residue polypeptide: NADH-ubiquinone oxidoreductase chain 4L (98 aa).

The next 3 helical transmembrane spans lie at 1 to 21 (MSMV…GLLI), 30 to 50 (LLCL…TILT), and 61 to 81 (IILL…LVMI).

The protein belongs to the complex I subunit 4L family. Core subunit of respiratory chain NADH dehydrogenase (Complex I) which is composed of 45 different subunits.

It is found in the mitochondrion inner membrane. The enzyme catalyses a ubiquinone + NADH + 5 H(+)(in) = a ubiquinol + NAD(+) + 4 H(+)(out). Core subunit of the mitochondrial membrane respiratory chain NADH dehydrogenase (Complex I) which catalyzes electron transfer from NADH through the respiratory chain, using ubiquinone as an electron acceptor. Part of the enzyme membrane arm which is embedded in the lipid bilayer and involved in proton translocation. This Martes americana (American marten) protein is NADH-ubiquinone oxidoreductase chain 4L (MT-ND4L).